Here is a 247-residue protein sequence, read N- to C-terminus: Probable transcriptional regulatory protein PMT_1423 (247 aa).

The protein belongs to the TACO1 family.

It localises to the cytoplasm. This Prochlorococcus marinus (strain MIT 9313) protein is Probable transcriptional regulatory protein PMT_1423.